A 227-amino-acid chain; its full sequence is Ribosomal RNA small subunit methyltransferase G (227 aa).

S-adenosyl-L-methionine-binding positions include Gly-74, Leu-79, 124–125, and Arg-142; that span reads AE.

The protein belongs to the methyltransferase superfamily. RNA methyltransferase RsmG family.

Its subcellular location is the cytoplasm. Functionally, specifically methylates the N7 position of guanine in position 518 of 16S rRNA. This Mycolicibacterium vanbaalenii (strain DSM 7251 / JCM 13017 / BCRC 16820 / KCTC 9966 / NRRL B-24157 / PYR-1) (Mycobacterium vanbaalenii) protein is Ribosomal RNA small subunit methyltransferase G.